The chain runs to 321 residues: ATP phosphoribosyltransferase regulatory subunit (321 aa).

It belongs to the class-II aminoacyl-tRNA synthetase family. HisZ subfamily. In terms of assembly, heteromultimer composed of HisG and HisZ subunits.

It is found in the cytoplasm. The protein operates within amino-acid biosynthesis; L-histidine biosynthesis; L-histidine from 5-phospho-alpha-D-ribose 1-diphosphate: step 1/9. Required for the first step of histidine biosynthesis. May allow the feedback regulation of ATP phosphoribosyltransferase activity by histidine. This is ATP phosphoribosyltransferase regulatory subunit from Thiobacillus denitrificans (strain ATCC 25259 / T1).